Consider the following 992-residue polypeptide: UvrABC system protein A (992 aa).

Residues 1–11 (MPKNSSTTVSS) show a composition bias toward polar residues. The tract at residues 1 to 30 (MPKNSSTTVSSAVEAHAGGLASGPGGARSG) is disordered. 62-69 (GLSGSGKS) lines the ATP pocket. The C4-type; atypical zinc finger occupies 302–330 (CPNGHEQTVDEIEPRSFSFNNPFGACPEC). ABC transporter domains follow at residues 360-639 (WSLG…TRSV) and 659-988 (PEKG…RFLA). 692-699 (GVSGSGKS) is a binding site for ATP. The segment at 791–817 (CEACAGDGTLKIEMNFLPDVYVPCEVC) adopts a C4-type zinc-finger fold.

Belongs to the ABC transporter superfamily. UvrA family. In terms of assembly, forms a heterotetramer with UvrB during the search for lesions.

Its subcellular location is the cytoplasm. In terms of biological role, the UvrABC repair system catalyzes the recognition and processing of DNA lesions. UvrA is an ATPase and a DNA-binding protein. A damage recognition complex composed of 2 UvrA and 2 UvrB subunits scans DNA for abnormalities. When the presence of a lesion has been verified by UvrB, the UvrA molecules dissociate. This Micrococcus luteus (Micrococcus lysodeikticus) protein is UvrABC system protein A.